The following is a 74-amino-acid chain: Small ribosomal subunit protein bS18 (74 aa).

This sequence belongs to the bacterial ribosomal protein bS18 family. In terms of assembly, part of the 30S ribosomal subunit. Forms a tight heterodimer with protein bS6.

Functionally, binds as a heterodimer with protein bS6 to the central domain of the 16S rRNA, where it helps stabilize the platform of the 30S subunit. The polypeptide is Small ribosomal subunit protein bS18 (Rhizorhabdus wittichii (strain DSM 6014 / CCUG 31198 / JCM 15750 / NBRC 105917 / EY 4224 / RW1) (Sphingomonas wittichii)).